Consider the following 392-residue polypeptide: uncharacterized protein (392 aa).

This sequence belongs to the peptidase M24 family.

This is an uncharacterized protein from Sinorhizobium fredii (strain NBRC 101917 / NGR234).